A 114-amino-acid polypeptide reads, in one-letter code: MEGNMGFITITKPALKQIAILKNDHENDVHLRIGVRQGGCSGMSYSMNFEHVDKLKDTDERLRLDNFSVVCDPKSLLYLYGLSLDFSSELIGGGFQFSNPNASQTCGCGKSFSG.

Residues C40, C106, and C108 each coordinate Fe cation.

It belongs to the HesB/IscA family. Ycf83 subfamily.

The protein localises to the plastid. The protein resides in the chloroplast. This is an uncharacterized protein from Pyropia yezoensis (Susabi-nori).